The sequence spans 332 residues: DNA-directed RNA polymerase subunit alpha (332 aa).

An alpha N-terminal domain (alpha-NTD) region spans residues 1–244 (MKKHAKVYYS…AHLNLLADVE (244 aa)). The segment at 259–332 (IKEEPIRRFS…NYKNENKGEN (74 aa)) is alpha C-terminal domain (alpha-CTD).

It belongs to the RNA polymerase alpha chain family. In terms of assembly, homodimer. The RNAP catalytic core consists of 2 alpha, 1 beta, 1 beta' and 1 omega subunit. When a sigma factor is associated with the core the holoenzyme is formed, which can initiate transcription.

It carries out the reaction RNA(n) + a ribonucleoside 5'-triphosphate = RNA(n+1) + diphosphate. In terms of biological role, DNA-dependent RNA polymerase catalyzes the transcription of DNA into RNA using the four ribonucleoside triphosphates as substrates. The protein is DNA-directed RNA polymerase subunit alpha of Mesomycoplasma hyopneumoniae (strain 232) (Mycoplasma hyopneumoniae).